Reading from the N-terminus, the 568-residue chain is Sulfite reductase [NADPH] hemoprotein beta-component (568 aa).

[4Fe-4S] cluster is bound by residues Cys425, Cys431, Cys470, and Cys474. Residue Cys474 participates in siroheme binding.

The protein belongs to the nitrite and sulfite reductase 4Fe-4S domain family. In terms of assembly, alpha(8)-beta(8). The alpha component is a flavoprotein, the beta component is a hemoprotein. It depends on siroheme as a cofactor. [4Fe-4S] cluster serves as cofactor.

The enzyme catalyses hydrogen sulfide + 3 NADP(+) + 3 H2O = sulfite + 3 NADPH + 4 H(+). Its pathway is sulfur metabolism; hydrogen sulfide biosynthesis; hydrogen sulfide from sulfite (NADPH route): step 1/1. In terms of biological role, component of the sulfite reductase complex that catalyzes the 6-electron reduction of sulfite to sulfide. This is one of several activities required for the biosynthesis of L-cysteine from sulfate. The protein is Sulfite reductase [NADPH] hemoprotein beta-component of Xanthomonas campestris pv. campestris (strain ATCC 33913 / DSM 3586 / NCPPB 528 / LMG 568 / P 25).